Consider the following 345-residue polypeptide: MSYLIKPQNYKPLLDLKQTELGIKQIKEFFQLNLSSELRLRRVTAPLFVLKGMGINDDLNGIERPVSFPIKDLGDAQAEVVHSLAKWKRLTLADYHIEPGYGIYTDMNAIRSDEELGNLHSLYVDQWDWERVITAEDRNADFLKEIVNRIYAAMIRTEYMVYEMYPQIKPCLPQKLHFIHSEELRQLYPDMEPKCREHAICKKYGAVFIIGIGCKLSDGKKHDGRAPDYDDYTSKGLNDLPGLNGDLLLWDDVLQRSIELSSMGIRVDKEALLRQVKQENQEQRLELYFHKRLLNDTLPLSIGGGIGQSRLCMFYLRKAHIGEIQASIWPEEMRRECTALNIHLI.

This sequence belongs to the class-II aminoacyl-tRNA synthetase family. AsnA subfamily.

The protein resides in the cytoplasm. It catalyses the reaction L-aspartate + NH4(+) + ATP = L-asparagine + AMP + diphosphate + H(+). The protein operates within amino-acid biosynthesis; L-asparagine biosynthesis; L-asparagine from L-aspartate (ammonia route): step 1/1. This chain is Aspartate--ammonia ligase, found in Bacteroides fragilis (strain ATCC 25285 / DSM 2151 / CCUG 4856 / JCM 11019 / LMG 10263 / NCTC 9343 / Onslow / VPI 2553 / EN-2).